The sequence spans 203 residues: dTTP/UTP pyrophosphatase (203 aa).

Catalysis depends on Asp70, which acts as the Proton acceptor.

This sequence belongs to the Maf family. YhdE subfamily. It depends on a divalent metal cation as a cofactor.

The protein localises to the cytoplasm. It carries out the reaction dTTP + H2O = dTMP + diphosphate + H(+). The catalysed reaction is UTP + H2O = UMP + diphosphate + H(+). Its function is as follows. Nucleoside triphosphate pyrophosphatase that hydrolyzes dTTP and UTP. May have a dual role in cell division arrest and in preventing the incorporation of modified nucleotides into cellular nucleic acids. The polypeptide is dTTP/UTP pyrophosphatase (maf-1) (Pseudomonas putida (strain ATCC 47054 / DSM 6125 / CFBP 8728 / NCIMB 11950 / KT2440)).